Reading from the N-terminus, the 444-residue chain is Phosphoglucosamine mutase (444 aa).

Serine 100 functions as the Phosphoserine intermediate in the catalytic mechanism. Residues serine 100, aspartate 240, aspartate 242, and aspartate 244 each coordinate Mg(2+). Serine 100 is modified (phosphoserine).

Belongs to the phosphohexose mutase family. Mg(2+) is required as a cofactor. In terms of processing, activated by phosphorylation.

The enzyme catalyses alpha-D-glucosamine 1-phosphate = D-glucosamine 6-phosphate. Its function is as follows. Catalyzes the conversion of glucosamine-6-phosphate to glucosamine-1-phosphate. The protein is Phosphoglucosamine mutase of Moorella thermoacetica (strain ATCC 39073 / JCM 9320).